We begin with the raw amino-acid sequence, 593 residues long: Glutamate decarboxylase 1 (593 aa).

The segment covering 1–12 has biased composition (low complexity); the sequence is MASSTPSPATSS. The segment at 1 to 22 is disordered; sequence MASSTPSPATSSNAGADPNTTN. Serine 77 carries the post-translational modification Phosphoserine. Residue 189–191 coordinates 4-aminobutanoate; it reads QLS. Lysine 404 is modified (N6-(pyridoxal phosphate)lysine). A 4-aminobutanoate-binding site is contributed by arginine 566.

This sequence belongs to the group II decarboxylase family. Homodimer. The cofactor is pyridoxal 5'-phosphate. Expressed in brain and pancreatic islets.

It catalyses the reaction L-glutamate + H(+) = 4-aminobutanoate + CO2. In terms of biological role, catalyzes the synthesis of the inhibitory neurotransmitter gamma-aminobutyric acid (GABA) with pyridoxal 5'-phosphate as cofactor. The protein is Glutamate decarboxylase 1 (Gad1) of Rattus norvegicus (Rat).